A 276-amino-acid chain; its full sequence is Putative metal-binding protein TC_0696 (276 aa).

An N-terminal signal peptide occupies residues 1–18 (MRLLILLLFSFGIIYSHG). H59, H121, H185, and D256 together coordinate a divalent metal cation.

This sequence belongs to the bacterial solute-binding protein 9 family.

Its subcellular location is the periplasm. Part of an ATP-binding cassette (ABC) transport system involved in metal import. Binds a metal with high affinity and specificity and delivers it to the membrane permease for translocation into the cytoplasm. This is Putative metal-binding protein TC_0696 from Chlamydia muridarum (strain MoPn / Nigg).